A 286-amino-acid chain; its full sequence is ATP synthase gamma chain (286 aa).

The protein belongs to the ATPase gamma chain family. F-type ATPases have 2 components, CF(1) - the catalytic core - and CF(0) - the membrane proton channel. CF(1) has five subunits: alpha(3), beta(3), gamma(1), delta(1), epsilon(1). CF(0) has three main subunits: a, b and c.

The protein resides in the cell inner membrane. In terms of biological role, produces ATP from ADP in the presence of a proton gradient across the membrane. The gamma chain is believed to be important in regulating ATPase activity and the flow of protons through the CF(0) complex. In Pseudomonas putida (strain ATCC 700007 / DSM 6899 / JCM 31910 / BCRC 17059 / LMG 24140 / F1), this protein is ATP synthase gamma chain.